The following is a 699-amino-acid chain: Cyclic AMP-dependent transcription factor ATF-6 beta (699 aa).

Alanine 2 carries the N-acetylalanine modification. At 2 to 393 (AELMLLSEIA…GLKLGSGNRK (392 aa)) the chain is on the cytoplasmic side. 3 disordered regions span residues 59-114 (SLDV…QVPG), 218-246 (VQIS…PKPV), and 290-313 (EGPA…PGNS). The span at 68–78 (PPEPPWDPLPI) shows a compositional bias: pro residues. A compositionally biased stretch (low complexity) spans 86-109 (SEPSSPCSSSSLSSESSHLSTEPP). The 64-residue stretch at 322–385 (LLKRQQRMIK…EALLAENSGL (64 aa)) folds into the bZIP domain. The interval 324–344 (KRQQRMIKNRESACQSRRKKK) is basic motif. Positions 347 to 354 (LQGLEARL) are leucine-zipper. A helical; Signal-anchor for type II membrane protein transmembrane segment spans residues 394–414 (VVCIMVFLLFIAFNFGPVSIS). Residues 415 to 699 (EPPPAPMSPR…ASQPLYLNHP (285 aa)) lie on the Lumenal side of the membrane. Residues 417-474 (PPAPMSPRMSREEPRPQRHLLGFSEPGPAHGMEPLREAAQSPGEQQPSSAGRPSFRNL) form a disordered region. Over residues 458-467 (PGEQQPSSAG) the composition is skewed to polar residues. Asparagine 473 and asparagine 502 each carry an N-linked (GlcNAc...) asparagine glycan. Positions 519-529 (RHQRGRRKIPH) are enriched in basic residues. The disordered stretch occupies residues 519-563 (RHQRGRRKIPHRAQERQKSQLRKKSPPVKPVPTQPPGPPERDPVG). The span at 545-556 (PVKPVPTQPPGP) shows a compositional bias: pro residues. Residues asparagine 607, asparagine 624, and asparagine 673 are each glycosylated (N-linked (GlcNAc...) asparagine). Residues 657-699 (STVPPSLRKQPSPSPGNTTGGPLPGSAASPAHQASQPLYLNHP) are disordered. The segment covering 680–693 (PGSAASPAHQASQP) has biased composition (low complexity).

This sequence belongs to the bZIP family. ATF subfamily. Homodimer and heterodimer with ATF6-alpha. The dimer interacts with the nuclear transcription factor Y (NF-Y) trimer through direct binding to NF-Y subunit C (NF-YC). N-glycosylated. Post-translationally, during unfolded protein response, a fragment of approximately 60 kDa containing the cytoplasmic transcription factor domain is released by proteolysis. The cleavage is probably performed sequentially by site-1 (MBTPS1, S1P) and site-2 (MBTPS2, S2P) proteases.

The protein localises to the endoplasmic reticulum membrane. The protein resides in the nucleus. Precursor of the transcription factor form (Processed cyclic AMP-dependent transcription factor ATF-6 beta), which is embedded in the endoplasmic reticulum membrane. Endoplasmic reticulum stress promotes processing of this form, releasing the transcription factor form that translocates into the nucleus, where it activates transcription of genes involved in the unfolded protein response (UPR). Functionally, transcription factor that acts in the unfolded protein response (UPR) pathway by activating UPR target genes induced during ER stress. Binds DNA on the 5'-CCAC[GA]-3' half of the ER stress response element (ERSE) (5'-CCAATN(9)CCAC[GA]-3') when NF-Y is bound to ERSE. The chain is Cyclic AMP-dependent transcription factor ATF-6 beta (Atf6b) from Mus musculus (Mouse).